We begin with the raw amino-acid sequence, 275 residues long: Energy-coupling factor transporter ATP-binding protein EcfA1 (275 aa).

An ABC transporter domain is found at 5–240 (IDVKNLSFRY…NDLDQIGLDD (236 aa)). Residue 40–47 (GHNGSGKS) participates in ATP binding.

The protein belongs to the ABC transporter superfamily. Energy-coupling factor EcfA family. Forms a stable energy-coupling factor (ECF) transporter complex composed of 2 membrane-embedded substrate-binding proteins (S component), 2 ATP-binding proteins (A component) and 2 transmembrane proteins (T component).

It is found in the cell membrane. In terms of biological role, ATP-binding (A) component of a common energy-coupling factor (ECF) ABC-transporter complex. Unlike classic ABC transporters this ECF transporter provides the energy necessary to transport a number of different substrates. The chain is Energy-coupling factor transporter ATP-binding protein EcfA1 from Streptococcus pneumoniae serotype 4 (strain ATCC BAA-334 / TIGR4).